Here is a 379-residue protein sequence, read N- to C-terminus: MSEFLPFSRPAMGVEELAAVKEVLESGWITTGPKNQALEQAFCQLTGNQHAIAVSSATAGMHITLMALEIGKGDEVITPSLTWVSTLNMISLLGATPVMVDVDRDTLMVTPEAIESAITPRTKAIIPVHYAGAPADIDAIRAIGERYGIAVIEDAAHAVGTYYKGRHIGAKGTAIFSFHAIKNITCAEGGLIVTDNENLARQLRMLKFHGLGVDAYDRQTWGRAPQAEVLTPGYKYNLTDINAAIALTQLVKLEHLNTRRREIAQQYQQALAALPFQPLSLPAWPHVHAWHLFIIRVDEQRCGISRDALMEALKERGIGTGLHFRAAHTQKYYRERFPTLSLPNTEWNSERICSLPLFPDMTTADADRVITALQQLAGQ.

Lys182 carries the N6-(pyridoxal phosphate)lysine modification.

The protein belongs to the DegT/DnrJ/EryC1 family. ArnB subfamily. In terms of assembly, homodimer. It depends on pyridoxal 5'-phosphate as a cofactor.

The catalysed reaction is UDP-4-amino-4-deoxy-beta-L-arabinose + 2-oxoglutarate = UDP-beta-L-threo-pentopyranos-4-ulose + L-glutamate. The protein operates within nucleotide-sugar biosynthesis; UDP-4-deoxy-4-formamido-beta-L-arabinose biosynthesis; UDP-4-deoxy-4-formamido-beta-L-arabinose from UDP-alpha-D-glucuronate: step 2/3. It participates in bacterial outer membrane biogenesis; lipopolysaccharide biosynthesis. Its function is as follows. Catalyzes the conversion of UDP-4-keto-arabinose (UDP-Ara4O) to UDP-4-amino-4-deoxy-L-arabinose (UDP-L-Ara4N). The modified arabinose is attached to lipid A and is required for resistance to polymyxin and cationic antimicrobial peptides. This Shigella flexneri protein is UDP-4-amino-4-deoxy-L-arabinose--oxoglutarate aminotransferase.